The following is a 210-amino-acid chain: MTGLFITLEGPEGAGKSTNREYLAAQLRAQGVQVLLTREPGGTPLAERIRELLLAPSDEAMSADTELLLVFAARAQHLAEVIRPALARGEVVLCDRFTDATYAYQGGGRGLSQQRIAVLEEFVQGDLRPDLTLVFDLPVEIGLSRAAARGRLDRFEQEGRAFFDAVRSTYLQRAKADPARYRLVDAAQPLADVQASLDTLLPQLLELRRG.

Residue 10–17 (GPEGAGKS) coordinates ATP.

The protein belongs to the thymidylate kinase family.

It catalyses the reaction dTMP + ATP = dTDP + ADP. Its function is as follows. Phosphorylation of dTMP to form dTDP in both de novo and salvage pathways of dTTP synthesis. The polypeptide is Thymidylate kinase (Pseudomonas savastanoi pv. phaseolicola (strain 1448A / Race 6) (Pseudomonas syringae pv. phaseolicola (strain 1448A / Race 6))).